The following is a 1592-amino-acid chain: Serine/threonine-protein kinase mrck-1 (1592 aa).

The involved in homo-dimerization stretch occupies residues 1–954 (MAEPPPDDSA…IFSPVSISAM (954 aa)). Residues 83–351 (FEVLKVIGKG…LSDFQLHPFF (269 aa)) form the Protein kinase domain. ATP-binding positions include 89-97 (IGKGAFGEV) and K112. D207 serves as the catalytic Proton acceptor. An AGC-kinase C-terminal domain is found at 352 to 426 (EGIDWNTIRD…THGSLLSDAR (75 aa)). S415 carries the post-translational modification Phosphoserine. Y416 carries the post-translational modification Phosphotyrosine. 2 coiled-coil regions span residues 444–782 (ELME…KNNS) and 811–871 (LDLQ…IENS). Residues 782-796 (SPLTTSNYIQNTPSG) show a composition bias toward polar residues. A disordered region spans residues 782–801 (SPLTTSNYIQNTPSGWGSRR). Residues 955–1534 (ERGHNFERMK…FRTIGKDDRS (580 aa)) are involved in binding to membranes, with a preference for di-phosphorylated phosphoinositides (PIPs). A Phorbol-ester/DAG-type zinc finger spans residues 957 to 1007 (GHNFERMKIKTPTKCGHCTSILIGLDRQGLFCQSCQYACHVSCAERVSQSC). Zn(2+) contacts are provided by H958, C971, C974, C988, C991, H996, C999, and C1007. Residues 1026 to 1154 (GTAYEGLVKT…WVVALSELKT (129 aa)) enclose the PH domain. Positions 1181 to 1479 (IRVAQCCAII…KPLSGDGILS (299 aa)) constitute a CNH domain. The CRIB domain occupies 1544-1557 (ISTPSDFMHIVHMG). Residues 1544–1557 (ISTPSDFMHIVHMG) form an involved in interaction with cdc-42 (GTP-bound). Deletion prevents rescue of a null mutant; furthermore deleted form of mrck-1 is no longer recruited to the cell cortex and instead appears to be completely cytoplasmic region.

This sequence belongs to the protein kinase superfamily. AGC Ser/Thr protein kinase family. DMPK subfamily. As to quaternary structure, homodimer, via N-terminal domains. Interacts (via the CRIB domain) with cdc-42 (GTP-bound), but with a lower affinity for cdc-42 bound to GDP; the interaction is direct and may play a role in the recruitment of mrck-1 to the apical membrane. Mg(2+) is required as a cofactor. In terms of tissue distribution, expressed in embryonic and L4 larval seam cells and in embryonic dorsal and ventral epidermal cells. Also expressed in the pharynx throughout development and in sublateral nerve cords in the L4 larva.

It is found in the cytoplasm. It localises to the cell cortex. The enzyme catalyses L-seryl-[protein] + ATP = O-phospho-L-seryl-[protein] + ADP + H(+). It carries out the reaction L-threonyl-[protein] + ATP = O-phospho-L-threonyl-[protein] + ADP + H(+). Functionally, serine/threonine-protein kinase. Involved in regulating endoderm precursor cell movements during early gastrulation; activates apical myosin and thereby increases actomyosin contractility and tension in the apical cell cortex, probably as a result of recruitment of mrck-1 to the cortex by a combination of interaction with active cdc-42 and membrane binding. May phosphorylate and inactivate the phosphatase mel-11, and thereby contribute to the regulation of myosin II contractility during embryonic elongation. Involved in controlling canal length and Golgi/ER integrity during excretory canal elongation. This chain is Serine/threonine-protein kinase mrck-1, found in Caenorhabditis elegans.